The chain runs to 584 residues: Long-chain-fatty-acid--AMP ligase FadD26 (584 aa).

It belongs to the ATP-dependent AMP-binding enzyme family.

It carries out the reaction holo-[(phenol)carboxyphthiodiolenone synthase] + a long-chain fatty acid + ATP = a long-chain fatty acyl-[(phenol)carboxyphthiodiolenone synthase] + AMP + diphosphate. The enzyme catalyses eicosanoate + holo-[(phenol)carboxyphthiodiolenone synthase] + ATP = icosanoyl-[(phenol)carboxyphthiodiolenone synthase] + AMP + diphosphate. The catalysed reaction is holo-[(phenol)carboxyphthiodiolenone synthase] + docosanoate + ATP = docosanoyl-[(phenol)carboxyphthiodiolenone synthase] + AMP + diphosphate. The protein operates within lipid metabolism; fatty acid biosynthesis. Its function is as follows. Catalyzes the activation of long-chain fatty acids as acyl-adenylates (acyl-AMP), which are then transferred to the multifunctional polyketide synthase PpsA for further chain extension. Catalyzes the adenylation of the long-chain fatty acids eicosanoate (C20) or docosanoate (C22), and potentially the very-long-chain fatty acid lignocerate (C24). Involved in the biosynthesis of phthiocerol dimycocerosate (DIM A) and phthiodiolone dimycocerosate (DIM B). This chain is Long-chain-fatty-acid--AMP ligase FadD26, found in Mycobacterium marinum (strain ATCC BAA-535 / M).